A 1030-amino-acid chain; its full sequence is FACT complex subunit spt-16 (1030 aa).

Residues 424 to 445 adopt a coiled-coil conformation; that stretch reads RLKSNVIKFKEEQENREAEKDN. 2 stretches are compositionally biased toward basic and acidic residues: residues 435–449 and 464–477; these read EQENREAEKDNDQKK and TRNKTTNEELRKER. Disordered stretches follow at residues 435 to 477 and 491 to 514; these read EQEN…RKER and ARLSKQGGGTDEKKSKKSNVSYKT. Residues 623–645 adopt a coiled-coil conformation; the sequence is RLIKEMQKRFKTEEAEEREKEGA. The tract at residues 927-1030 is disordered; sequence VESDNEEAMD…KSGPSHKRRK (104 aa). 2 stretches are compositionally biased toward acidic residues: residues 929-951 and 958-983; these read SDNEEAMDDSDDSDAYDPEEEDA and ESDEDESEGEETESDDDDEGSLDSDE. Positions 987 to 1007 form a coiled coil; the sequence is KDWSDLEEEAANADKRREVEE. The span at 998-1014 shows a compositional bias: basic and acidic residues; the sequence is NADKRREVEEPSRDRDR. Basic residues predominate over residues 1015-1030; the sequence is KRPHSSKSGPSHKRRK.

This sequence belongs to the peptidase M24 family. SPT16 subfamily. In terms of assembly, component of the FACT complex, a stable heterodimer of spt-16 and hmg-3 or hmg-4. In terms of tissue distribution, expressed in the germline and somatic cells.

The protein localises to the nucleus. It localises to the chromosome. Component of the FACT complex, a general chromatin factor that acts to reorganize nucleosomes. The FACT complex is involved in multiple processes that require DNA as a template such as mRNA elongation, DNA replication and DNA repair. During transcription elongation the FACT complex acts as a histone chaperone that both destabilizes and restores nucleosomal structure. It facilitates the passage of RNA polymerase II and transcription by promoting the dissociation of one histone H2A-H2B dimer from the nucleosome, then subsequently promotes the reestablishment of the nucleosome following the passage of RNA polymerase II. In embryos, promotes cell cycle progression and chromosomal segregation. Plays a role in the development of the anterior pharynx during embryonic development. The polypeptide is FACT complex subunit spt-16 (Caenorhabditis elegans).